We begin with the raw amino-acid sequence, 234 residues long: DNA repair protein RecO (234 aa).

This sequence belongs to the RecO family.

In terms of biological role, involved in DNA repair and RecF pathway recombination. This chain is DNA repair protein RecO, found in Alteromonas mediterranea (strain DSM 17117 / CIP 110805 / LMG 28347 / Deep ecotype).